Consider the following 207-residue polypeptide: Guanylate kinase (207 aa).

One can recognise a Guanylate kinase-like domain in the interval 4–184; sequence GTLYIVSAPS…AQMDFRSIIR (181 aa). 11–18 is an ATP binding site; it reads APSGAGKS.

Belongs to the guanylate kinase family.

It is found in the cytoplasm. It carries out the reaction GMP + ATP = GDP + ADP. Functionally, essential for recycling GMP and indirectly, cGMP. This chain is Guanylate kinase, found in Aliivibrio fischeri (strain ATCC 700601 / ES114) (Vibrio fischeri).